Here is a 594-residue protein sequence, read N- to C-terminus: MRSVYCGVVNTSNIDQEITLCGWVDRRRDHGGVIFIDLRDREGIVQVVFDPDAADKFALADKVRPEYVLRVTGKVRARSEATVNANMATGQIEVYGTDLEILNSAETPPFQLDEHTNVGEDVRLKYRYLDLRRDAMQQRLKFRSKVTNAIRNYLDDNDFLDIETPILTRATPEGARDYLVPSRTHDGKFFALPQSPQLFKQLLMVSGFDRYYQIAKCFRDEDLRADRQPEFTQIDIETSFMDEEQIMSVTEGMISKLFRELKGVELGEFPRMPYAEAMEKYGSDKPDMRIPLEMVEIKDLMASVDFKVFSGPASDPKGRVTAMKVPGGGEIPRKKIDAYTKFVSIYGAKGLAYIKVNDKTDLEGGLQSPIVKFLPQDVLQALLDRLEVENGDLIFFGADSAKVVTEALGALRCELGKDLNLYTCEWAPLWVVDFPMFEELEDGSLTALHHPFTAPSCSPEELSANPATALSRAYDMVLNGTELGGGSIRIHDQSMQQEVFRVLGIGEEEQREKFGFLLDALKYGAPPHGGLAFGLDRLIMLMTGASSIRDVIAFPKTQSAACVMTDAPGAVDKKQLEELHIRLRPVVAQPKEQG.

L-aspartate is bound at residue Glu-173. The interval 197 to 200 (QLFK) is aspartate. Arg-219 contributes to the L-aspartate binding site. Residues 219-221 (RDE) and Gln-228 each bind ATP. His-449 serves as a coordination point for L-aspartate. An ATP-binding site is contributed by Glu-482. Arg-489 provides a ligand contact to L-aspartate. ATP is bound at residue 534–537 (GLDR).

The protein belongs to the class-II aminoacyl-tRNA synthetase family. Type 1 subfamily. Homodimer.

It localises to the cytoplasm. The enzyme catalyses tRNA(Asx) + L-aspartate + ATP = L-aspartyl-tRNA(Asx) + AMP + diphosphate. In terms of biological role, aspartyl-tRNA synthetase with relaxed tRNA specificity since it is able to aspartylate not only its cognate tRNA(Asp) but also tRNA(Asn). Reaction proceeds in two steps: L-aspartate is first activated by ATP to form Asp-AMP and then transferred to the acceptor end of tRNA(Asp/Asn). The chain is Aspartate--tRNA(Asp/Asn) ligase from Saccharophagus degradans (strain 2-40 / ATCC 43961 / DSM 17024).